An 83-amino-acid chain; its full sequence is Small ribosomal subunit protein eS21 (83 aa).

This sequence belongs to the eukaryotic ribosomal protein eS21 family. Component of the 40S small ribosomal subunit.

The protein localises to the cytoplasm. It is found in the cytosol. The protein resides in the rough endoplasmic reticulum. Component of the small ribosomal subunit. The ribosome is a large ribonucleoprotein complex responsible for the synthesis of proteins in the cell. This Xenopus laevis (African clawed frog) protein is Small ribosomal subunit protein eS21 (rps21).